Here is a 94-residue protein sequence, read N- to C-terminus: Co-chaperonin GroES (94 aa).

It belongs to the GroES chaperonin family. Heptamer of 7 subunits arranged in a ring. Interacts with the chaperonin GroEL.

It localises to the cytoplasm. Together with the chaperonin GroEL, plays an essential role in assisting protein folding. The GroEL-GroES system forms a nano-cage that allows encapsulation of the non-native substrate proteins and provides a physical environment optimized to promote and accelerate protein folding. GroES binds to the apical surface of the GroEL ring, thereby capping the opening of the GroEL channel. The sequence is that of Co-chaperonin GroES from Brevibacillus choshinensis.